The sequence spans 1166 residues: Serine/threonine-protein kinase BRI1-like 1 (1166 aa).

A signal peptide spans 1–21 (MKQRWLLVLILCFFTTSLVMG). The Extracellular segment spans residues 22 to 776 (IHGKHLINDD…IHAKKQTVAT (755 aa)). The N-linked (GlcNAc...) asparagine glycan is linked to Asn-33. The Cys pair 1 motif lies at 66–73 (CSWRGVSC). 20 LRR repeats span residues 78-99 (RIVGLDLRNSGLTGTLNLVNLT), 103-124 (NLQNLYLQGNYFSSGGDSSGSD), 126-147 (YLQVLDLSSNSISDYSMVDYVF), 152-173 (NLVSVNISNNKLVGKLGFAPSS), 176-197 (SLTTVDLSYNILSDKIPESFIS), 202-224 (SLKYLDLTHNNLSGDFSDLSFGI), 227-248 (NLTFFSLSQNNLSGDKFPITLP), 252-274 (FLETLNISRNNLAGKIPNGEYWG), 278-300 (NLKQLSLAHNRLSGEIPPELSLL), 303-325 (TLVILDLSGNTFSGELPSQFTAC), 327-349 (WLQNLNLGNNYLSGDFLNTVVSK), 352-375 (GITYLYVAYNNISGSVPISLTNCS), 376-397 (NLRVLDLSSNGFTGNVPSGFCS), 403-424 (VLEKILIANNYLSGTVPMELGK), 427-449 (SLKTIDLSFNELTGPIPKEIWML), 451-473 (NLSDLVMWANNLTGTIPEGVCVK), 476-498 (NLETLILNNNLLTGSIPESISRC), 500-522 (NMIWISLSSNRLTGKIPSGIGNL), 524-547 (KLAILQLGNNSLSGNVPRQLGNCK), and 548-570 (SLIWLDLNSNNLTGDLPGELASQ). N-linked (GlcNAc...) asparagine glycosylation occurs at Asn-97. A glycan (N-linked (GlcNAc...) asparagine) is linked at Asn-157. N-linked (GlcNAc...) asparagine glycans are attached at residues Asn-212, Asn-227, Asn-237, and Asn-257. 2 N-linked (GlcNAc...) asparagine glycosylation sites follow: Asn-362 and Asn-373. Residues Asn-451 and Asn-461 are each glycosylated (N-linked (GlcNAc...) asparagine). Residues Asn-521, Asn-532, Asn-558, and Asn-638 are each glycosylated (N-linked (GlcNAc...) asparagine). 3 LRR repeats span residues 664-686 (YLQVLNLGHNRITGTIPDSFGGL), 688-710 (AIGVLDLSHNNLQGYLPGSLGSL), and 712-734 (FLSDLDVSNNNLTGPIPFGGQLT). 2 N-linked (GlcNAc...) asparagine glycosylation sites follow: Asn-722 and Asn-743. The Cys pair 2 signature appears at 748-755 (CGVPLRPC). A helical membrane pass occupies residues 777-797 (AVIAGIAFSFMCFVMLVMALY). The Cytoplasmic segment spans residues 798 to 1166 (RVRKVQKKEQ…LVEESRDKEP (369 aa)). 2 positions are modified to phosphothreonine: Thr-848 and Thr-856. The 289-residue stretch at 859 to 1147 (FSAETMVGSG…KADTEEDESL (289 aa)) folds into the Protein kinase domain. Residues 865–873 (VGSGGFGEV) and Lys-887 each bind ATP. Tyr-932 bears the Phosphotyrosine mark. Catalysis depends on Asp-987, which acts as the Proton acceptor. Ser-1022 is modified (phosphoserine). Residue Tyr-1030 is modified to Phosphotyrosine. A Phosphothreonine modification is found at Thr-1141. A disordered region spans residues 1142–1166 (EEDESLDEFSLKETPLVEESRDKEP).

It belongs to the protein kinase superfamily. Ser/Thr protein kinase family. Predominantly expressed in vascular tissues. From 7 day old seedlings, it is expressed in the columella cells of the root tip, in the vascular initials in the meristematic region of the root and in vascular tissues. After germination, it is expressed in the stele cell and in the early differentiation zone of the root, where the expression continues from the root to the hypocotyls and cotyledons following the midvein. In mature plants, it is expressed in the vasculature of the leaf, predominantly in the midvein, and in the vascular bundles of inflorescence stems. Localizes to procambial cells of the vascular bundles located between the differentiating xylem and the phloem.

The protein resides in the cell membrane. The catalysed reaction is L-seryl-[protein] + ATP = O-phospho-L-seryl-[protein] + ADP + H(+). It catalyses the reaction L-threonyl-[protein] + ATP = O-phospho-L-threonyl-[protein] + ADP + H(+). Functionally, receptor with a serine/threonine-protein kinase activity. Regulates, in response to brassinosteroid binding, a signaling cascade involved in plant development. Binds brassinolide. May be involved in cell growth and vascular differentiation. This chain is Serine/threonine-protein kinase BRI1-like 1 (BRL1), found in Arabidopsis thaliana (Mouse-ear cress).